Reading from the N-terminus, the 208-residue chain is 3-demethoxyubiquinol 3-hydroxylase (208 aa).

Residues Glu-57, Glu-87, His-90, Glu-139, Glu-171, and His-174 each coordinate Fe cation.

Belongs to the COQ7 family. Fe cation serves as cofactor.

The protein localises to the cell membrane. It carries out the reaction a 5-methoxy-2-methyl-3-(all-trans-polyprenyl)benzene-1,4-diol + AH2 + O2 = a 3-demethylubiquinol + A + H2O. It participates in cofactor biosynthesis; ubiquinone biosynthesis. Catalyzes the hydroxylation of 2-nonaprenyl-3-methyl-6-methoxy-1,4-benzoquinol during ubiquinone biosynthesis. This chain is 3-demethoxyubiquinol 3-hydroxylase, found in Burkholderia cenocepacia (strain HI2424).